The following is a 159-amino-acid chain: Small ribosomal subunit protein uS17x (159 aa).

It belongs to the universal ribosomal protein uS17 family.

The protein localises to the cytoplasm. The chain is Small ribosomal subunit protein uS17x (RPS11C) from Arabidopsis thaliana (Mouse-ear cress).